The primary structure comprises 375 residues: MEECSCDNRFRRGNNEPAGFSLDEQWWAGNIRLVDLSGQLLGAHIAHAGLIAFWAGSITVLEVARYVPDVPFYEQGLGLLPHLATLGFGIGPDGTVVDTYPYFVIGILHLVTSAVLGAGGLFHTFKGPAILAEGGALAPKFHYDWGDTKQLSLILGHHLLLLGILCLAFVAKAMFWGGVYDASLGTVHTVSPNLNPADIFGYVFGFNHGQFNGLGMSSVDNLPDIIGGHVYIGILELIGGTWHILTKPFAIGAKPFSFSGEAILSYSLGAVGWMGLLSGFFVRYCDAAYPPQFYGPERSGAAAVQYILGVLLLVGHVWHATRARAGGEPVPYTPPAPQRGRFGMTRVAPAPARTFIGRGKPQPEPPKKKGLFGRG.

Transmembrane regions (helical) follow at residues 40-60 (LLGA…SITV), 102-122 (YFVI…GGLF), 151-171 (LSLI…AFVA), 225-245 (IIGG…WHIL), 262-282 (AILS…GFFV), and 300-320 (GAAA…VWHA). Positions 352–375 (ARTFIGRGKPQPEPPKKKGLFGRG) are disordered.

This sequence belongs to the PsbB/PsbC family. IsiA/Pcb subfamily. In terms of assembly, the antenna complex consists of chlorophylls (a and b) and chlorophyll a/b binding proteins. It depends on chlorophyll a as a cofactor. Chlorophyll b serves as cofactor.

The protein resides in the cellular thylakoid membrane. Its function is as follows. The antenna complex functions as a light receptor, it captures and delivers excitation energy to photosystems II and I. The Prochlorales pcb genes are not related to higher plant LHCs. The protein is Chlorophyll a/b light-harvesting protein PcbC (pcbC) of Prochlorothrix hollandica.